A 99-amino-acid polypeptide reads, in one-letter code: MMNMQSMMKQAQKLQKQMQVSQEEIANTTFVGKSAQDLVTVEFSGDRTLKSLNINPDVIDPEDPETLQDMVTDAVNDALSQIEKVTEQKLGKFTKGLPF.

Belongs to the YbaB/EbfC family. In terms of assembly, homodimer.

The protein localises to the cytoplasm. The protein resides in the nucleoid. Binds to DNA and alters its conformation. May be involved in regulation of gene expression, nucleoid organization and DNA protection. The polypeptide is Nucleoid-associated protein LACR_0106 (Lactococcus lactis subsp. cremoris (strain SK11)).